The following is an 853-amino-acid chain: Auxin response factor 23 (853 aa).

Residues 118-141 (PESKQQEDNGSTEEEVPSAPAAGH) form a disordered region. Residues 149–251 (FCKTLTASDT…ELRVGVRRAM (103 aa)) constitute a DNA-binding region (TF-B3). Disordered regions lie at residues 422–484 (ESEP…RMQM) and 647–723 (PAKS…QGVS). Over residues 425–455 (PNGTQRTFQTQENATPKSGFGNSSELESAQK) the composition is skewed to polar residues. Residues 672 to 686 (EWRRPDVTEVEKCSD) are compositionally biased toward basic and acidic residues. The span at 706–723 (PSSQQASRNMSCKSQGVS) shows a compositional bias: polar residues. In terms of domain architecture, PB1 spans 725–809 (RSCKKVHKQG…HKIFIYTREE (85 aa)). The tract at residues 815–853 (PGTLNSRSEDSHANSMERGSVGREMRGCLSTSSLNSENC) is disordered. Over residues 843-853 (LSTSSLNSENC) the composition is skewed to polar residues.

Belongs to the ARF family. In terms of assembly, homodimers and heterodimers. Interacts with CRL1. As to expression, expressed in roots, culms, leaves and young panicles.

The protein localises to the nucleus. Functionally, auxin response factors (ARFs) are transcriptional factors that bind specifically to the DNA sequence 5'-TGTCTC-3' found in the auxin-responsive promoter elements (AuxREs). The polypeptide is Auxin response factor 23 (ARF23) (Oryza sativa subsp. japonica (Rice)).